Reading from the N-terminus, the 91-residue chain is N.vectensis toxin 8 (91 aa).

Residues 1-26 form the signal peptide; it reads MNSLLKVAVVCLVMLVACFVPRVILT. Cystine bridges form between Cys-45–Cys-76, Cys-47–Cys-67, and Cys-60–Cys-77.

In terms of tissue distribution, expressed in ectodermal gland cells.

Its function is as follows. Has toxic effects on zebrafish larvae. It causes contractile paralysis and twitching of the tail within 20 minutes, followed by death within 30 minutes. Does not show any toxicity when injected into arthropods (cherry shrimps or grass shrimps). In Nematostella vectensis (Starlet sea anemone), this protein is N.vectensis toxin 8.